An 83-amino-acid polypeptide reads, in one-letter code: Cytochrome b559 subunit alpha (83 aa).

A helical transmembrane segment spans residues 21–35 (VIHSITIPSLFIAGW). Position 23 (H23) interacts with heme.

The protein belongs to the PsbE/PsbF family. As to quaternary structure, heterodimer of an alpha subunit and a beta subunit. PSII is composed of 1 copy each of membrane proteins PsbA, PsbB, PsbC, PsbD, PsbE, PsbF, PsbH, PsbI, PsbJ, PsbK, PsbL, PsbM, PsbT, PsbX, PsbY, PsbZ, Psb30/Ycf12, at least 3 peripheral proteins of the oxygen-evolving complex and a large number of cofactors. It forms dimeric complexes. Heme b serves as cofactor.

Its subcellular location is the plastid. The protein resides in the chloroplast thylakoid membrane. Functionally, this b-type cytochrome is tightly associated with the reaction center of photosystem II (PSII). PSII is a light-driven water:plastoquinone oxidoreductase that uses light energy to abstract electrons from H(2)O, generating O(2) and a proton gradient subsequently used for ATP formation. It consists of a core antenna complex that captures photons, and an electron transfer chain that converts photonic excitation into a charge separation. The polypeptide is Cytochrome b559 subunit alpha (Liriodendron tulipifera (Tuliptree)).